Here is a 71-residue protein sequence, read N- to C-terminus: MRKSFYTWLMTERNPKSNNPKAILADLAFEEAAFPKHTDDFDEVSRFLEEHASFSFNLGDFDSIWQEYLEH.

It belongs to the UPF0346 family.

The polypeptide is UPF0346 protein SPP_0954 (Streptococcus pneumoniae (strain P1031)).